A 241-amino-acid polypeptide reads, in one-letter code: Proteasome subunit alpha (241 aa).

Belongs to the peptidase T1A family. The 20S proteasome core is composed of 14 alpha and 14 beta subunits that assemble into four stacked heptameric rings, resulting in a barrel-shaped structure. The two inner rings, each composed of seven catalytic beta subunits, are sandwiched by two outer rings, each composed of seven alpha subunits. The catalytic chamber with the active sites is on the inside of the barrel. Has a gated structure, the ends of the cylinder being occluded by the N-termini of the alpha-subunits. Is capped at one or both ends by the proteasome regulatory ATPase, PAN.

It localises to the cytoplasm. The formation of the proteasomal ATPase PAN-20S proteasome complex, via the docking of the C-termini of PAN into the intersubunit pockets in the alpha-rings, triggers opening of the gate for substrate entry. Interconversion between the open-gate and close-gate conformations leads to a dynamic regulation of the 20S proteasome proteolysis activity. Its function is as follows. Component of the proteasome core, a large protease complex with broad specificity involved in protein degradation. The protein is Proteasome subunit alpha of Methanosphaerula palustris (strain ATCC BAA-1556 / DSM 19958 / E1-9c).